A 578-amino-acid polypeptide reads, in one-letter code: Isocitrate dehydrogenase kinase/phosphatase (578 aa).

Residues 315–321 and Lys336 each bind ATP; that span reads APGIRGM. Asp371 is an active-site residue.

This sequence belongs to the AceK family.

It is found in the cytoplasm. It carries out the reaction L-seryl-[isocitrate dehydrogenase] + ATP = O-phospho-L-seryl-[isocitrate dehydrogenase] + ADP + H(+). Functionally, bifunctional enzyme which can phosphorylate or dephosphorylate isocitrate dehydrogenase (IDH) on a specific serine residue. This is a regulatory mechanism which enables bacteria to bypass the Krebs cycle via the glyoxylate shunt in response to the source of carbon. When bacteria are grown on glucose, IDH is fully active and unphosphorylated, but when grown on acetate or ethanol, the activity of IDH declines drastically concomitant with its phosphorylation. This chain is Isocitrate dehydrogenase kinase/phosphatase, found in Escherichia coli O139:H28 (strain E24377A / ETEC).